The following is a 461-amino-acid chain: Hydroxyproline dehydrogenase (461 aa).

Lys310 is modified (N6-acetyllysine).

Belongs to the proline oxidase family. It depends on FAD as a cofactor.

The enzyme catalyses trans-4-hydroxy-L-proline + a quinone = (3R,5S)-1-pyrroline-3-hydroxy-5-carboxylate + a quinol + H(+). The catalysed reaction is L-proline + a quinone = (S)-1-pyrroline-5-carboxylate + a quinol + H(+). Its pathway is amino-acid degradation; L-proline degradation into L-glutamate; L-glutamate from L-proline: step 1/2. Dehydrogenase that converts trans-4-L-hydroxyproline to delta-1-pyrroline-3-hydroxy-5-carboxylate (Hyp) using ubiquinone-10 as the terminal electron acceptor. Can also use proline as a substrate but with a very much lower efficiency. Does not react with other diastereomers of Hyp: trans-4-D-hydroxyproline and cis-4-L-hydroxyproline. Ubiquininone analogs such as menadione, duroquinone and ubiquinone-1 react more efficiently than oxygen as the terminal electron acceptor during catalysis. The protein is Hydroxyproline dehydrogenase of Bos taurus (Bovine).